Reading from the N-terminus, the 188-residue chain is GMP synthase [glutamine-hydrolyzing] subunit A (188 aa).

The 188-residue stretch at 1 to 188 (MIVILDNGGQ…FCKVCGYKFE (188 aa)) folds into the Glutamine amidotransferase type-1 domain. The active-site Nucleophile is the cysteine 76. Catalysis depends on residues histidine 163 and glutamate 165.

Heterodimer composed of a glutamine amidotransferase subunit (A) and a GMP-binding subunit (B).

It carries out the reaction XMP + L-glutamine + ATP + H2O = GMP + L-glutamate + AMP + diphosphate + 2 H(+). It participates in purine metabolism; GMP biosynthesis; GMP from XMP (L-Gln route): step 1/1. In terms of biological role, catalyzes the synthesis of GMP from XMP. This chain is GMP synthase [glutamine-hydrolyzing] subunit A, found in Methanocaldococcus jannaschii (strain ATCC 43067 / DSM 2661 / JAL-1 / JCM 10045 / NBRC 100440) (Methanococcus jannaschii).